A 148-amino-acid chain; its full sequence is Ergosterol biosynthetic protein 28 (148 aa).

The Cytoplasmic portion of the chain corresponds to 1–25; the sequence is MFSLQDVITTTKTTLAAMPKGYLPK. The helical transmembrane segment at 26-46 threads the bilayer; that stretch reads WLLFISIVSVFNSIQTYVSGL. The Lumenal segment spans residues 47 to 92; that stretch reads ELTRKVYERKPTETTHLSARTFGTWTFISCVIRFYGAMYLNEPHIF. The chain crosses the membrane as a helical span at residues 93–113; sequence ELVFMSYMVALFHFGSELLIF. The Cytoplasmic segment spans residues 114 to 120; sequence RTCKLGK. Residues 121–136 form a helical membrane-spanning segment; that stretch reads GFMGPLVVSTTSLVWM. Over 137 to 148 the chain is Lumenal; the sequence is YKQREYYTGVAW.

This sequence belongs to the ERG28 family. As to quaternary structure, heterotetramer of ERG25, ERG26, ERG27 and ERG28. ERG28 acts as a scaffold to tether ERG27 and other 4,4-demethylation-related enzymes, forming a demethylation enzyme complex, in the endoplasmic reticulum. Interacts with ERG25, ERG26 and ERG27. Also interacts with ERG1, ERG3, ERG5, ERG6 and ERG11.

It localises to the endoplasmic reticulum membrane. In terms of biological role, part of the third module of ergosterol biosynthesis pathway that includes the late steps of the pathway. ERG28 has a role as a scaffold to help anchor the catalytic components of the C-4 demethylation complex ERG25, ERG26 and ERG27 to the endoplasmic reticulum. The third module or late pathway involves the ergosterol synthesis itself through consecutive reactions that mainly occur in the endoplasmic reticulum (ER) membrane. Firstly, the squalene synthase ERG9 catalyzes the condensation of 2 farnesyl pyrophosphate moieties to form squalene, which is the precursor of all steroids. Squalene synthase is crucial for balancing the incorporation of farnesyl diphosphate (FPP) into sterol and nonsterol isoprene synthesis. Secondly, the squalene epoxidase ERG1 catalyzes the stereospecific oxidation of squalene to (S)-2,3-epoxysqualene, which is considered to be a rate-limiting enzyme in steroid biosynthesis. Then, the lanosterol synthase ERG7 catalyzes the cyclization of (S)-2,3 oxidosqualene to lanosterol, a reaction that forms the sterol core. In the next steps, lanosterol is transformed to zymosterol through a complex process involving various demethylation, reduction and desaturation reactions. The lanosterol 14-alpha-demethylase ERG11 (also known as CYP51) catalyzes C14-demethylation of lanosterol to produce 4,4'-dimethyl cholesta-8,14,24-triene-3-beta-ol, which is critical for ergosterol biosynthesis. The C-14 reductase ERG24 reduces the C14=C15 double bond of 4,4-dimethyl-cholesta-8,14,24-trienol to produce 4,4-dimethyl-cholesta-8,24-dienol. 4,4-dimethyl-cholesta-8,24-dienol is substrate of the C-4 demethylation complex ERG25-ERG26-ERG27 in which ERG25 catalyzes the three-step monooxygenation required for the demethylation of 4,4-dimethyl and 4alpha-methylsterols, ERG26 catalyzes the oxidative decarboxylation that results in a reduction of the 3-beta-hydroxy group at the C-3 carbon to an oxo group, and ERG27 is responsible for the reduction of the keto group on the C-3. ERG28 has a role as a scaffold to help anchor ERG25, ERG26 and ERG27 to the endoplasmic reticulum and ERG29 regulates the activity of the iron-containing C4-methylsterol oxidase ERG25. Then, the sterol 24-C-methyltransferase ERG6 catalyzes the methyl transfer from S-adenosyl-methionine to the C-24 of zymosterol to form fecosterol. The C-8 sterol isomerase ERG2 catalyzes the reaction which results in unsaturation at C-7 in the B ring of sterols and thus converts fecosterol to episterol. The sterol-C5-desaturase ERG3 then catalyzes the introduction of a C-5 double bond in the B ring to produce 5-dehydroepisterol. The C-22 sterol desaturase ERG5 further converts 5-dehydroepisterol into ergosta-5,7,22,24(28)-tetraen-3beta-ol by forming the C-22(23) double bond in the sterol side chain. Finally, ergosta-5,7,22,24(28)-tetraen-3beta-ol is substrate of the C-24(28) sterol reductase ERG4 to produce ergosterol. The polypeptide is Ergosterol biosynthetic protein 28 (Saccharomyces cerevisiae (strain ATCC 204508 / S288c) (Baker's yeast)).